Consider the following 176-residue polypeptide: Large ribosomal subunit protein uL6 (176 aa).

It belongs to the universal ribosomal protein uL6 family. As to quaternary structure, part of the 50S ribosomal subunit.

Functionally, this protein binds to the 23S rRNA, and is important in its secondary structure. It is located near the subunit interface in the base of the L7/L12 stalk, and near the tRNA binding site of the peptidyltransferase center. In Lactobacillus acidophilus (strain ATCC 700396 / NCK56 / N2 / NCFM), this protein is Large ribosomal subunit protein uL6.